We begin with the raw amino-acid sequence, 675 residues long: Vitamin K-dependent protein S (675 aa).

An N-terminal signal peptide occupies residues 1–24 (MRVLSVRFRVLLACLALVLPNSET). Positions 25–41 (NFLSKERASQVLVRKRR) are excised as a propeptide. In terms of domain architecture, Gla spans 42–87 (ANTLLEETKKGNLERECIEELCNKEEAREVFENNPETDYFYPKYLG). E47, E48, E55, E57, E60, E61, E66, E67, E70, E73, and E77 each carry 4-carboxyglutamate. C58 and C63 form a disulfide bridge. Positions 88–116 (CLGAFRVGAFSAARQSANAYPDLRSCVNA) are thrombin-sensitive. An EGF-like 1 domain is found at 117 to 155 (IPDQCDPMPCNEDGYLSCKDGQGAFTCICKPGWQGDKCQ). 13 disulfides stabilise this stretch: C121-C134, C126-C143, C145-C154, C161-C175, C171-C184, C186-C199, C205-C217, C212-C226, C228-C241, C247-C256, C252-C265, C267-C282, and C449-C475. (3R)-3-hydroxyaspartate is present on D136. One can recognise an EGF-like 2; calcium-binding domain in the interval 157 to 200 (DINECKDPSNINGGCSQTCDNTPGSYHCSCKIGFAMLTNKKDCK). The EGF-like 3; calcium-binding domain occupies 201–242 (DVDECSLKPSVCGTAVCKNIPGDFECECPNGYRYDPSSKSCK). Residues 243 to 283 (DVDECSENTCAQLCVNYPGGYSCYCDGKKGFKLAQDQRSCE) form the EGF-like 4; calcium-binding domain. Laminin G-like domains lie at 299–475 (LLYL…NKHC) and 484–665 (YYPG…AHSC). 2 N-linked (GlcNAc...) asparagine glycosylation sites follow: N499 and N509.

In terms of processing, the iron and 2-oxoglutarate dependent 3-hydroxylation of aspartate and asparagine is (R) stereospecific within EGF domains. As to expression, plasma.

Its subcellular location is the secreted. Functionally, anticoagulant plasma protein; it is a cofactor to activated protein C in the degradation of coagulation factors Va and VIIIa. It helps to prevent coagulation and stimulating fibrinolysis. The polypeptide is Vitamin K-dependent protein S (Pros1) (Rattus norvegicus (Rat)).